The following is a 361-amino-acid chain: MKPSIHSLAHQTMQEWVLEQGEKKFRADQIWEWLYRKRVQSFEEMTNLSKDLIAKLNDQFVVNPLKQRIVQESADGTVKYLFELPDGMLIETVLMCQHYGLSVCVTTQVGCNIGCTFCSSGLIKKQRDLNNGEIVAQIMLVQKYFDERGQDERVSHIVVMGIGEPFDNYNNVLNFFRTINDDKGMAIGARHITVSTSGLAHKIRDFADEGVQVNLAVSLHAPNNELRSSIMKINRAFPIEKLFAAIEYYIETTNRRVTFEYIMLNEVNDGVEQALELTELLKNIKKLSYVNLIPYNPVSEHDQYSRSPKERVLAFYDTLKKKGVNCVVRQEHGTDIDAACGQLRSNTMKRDRQKAVAAVNP.

Catalysis depends on E91, which acts as the Proton acceptor. In terms of domain architecture, Radical SAM core spans 97 to 329; it reads QHYGLSVCVT…KKKGVNCVVR (233 aa). An intrachain disulfide couples C104 to C340. Residues C111, C115, and C118 each contribute to the [4Fe-4S] cluster site. Residues 163 to 164, S195, 218 to 220, and N296 contribute to the S-adenosyl-L-methionine site; these read GE and SLH. C340 (S-methylcysteine intermediate) is an active-site residue.

It belongs to the radical SAM superfamily. RlmN family. [4Fe-4S] cluster serves as cofactor.

It localises to the cytoplasm. It carries out the reaction adenosine(2503) in 23S rRNA + 2 reduced [2Fe-2S]-[ferredoxin] + 2 S-adenosyl-L-methionine = 2-methyladenosine(2503) in 23S rRNA + 5'-deoxyadenosine + L-methionine + 2 oxidized [2Fe-2S]-[ferredoxin] + S-adenosyl-L-homocysteine. The enzyme catalyses adenosine(37) in tRNA + 2 reduced [2Fe-2S]-[ferredoxin] + 2 S-adenosyl-L-methionine = 2-methyladenosine(37) in tRNA + 5'-deoxyadenosine + L-methionine + 2 oxidized [2Fe-2S]-[ferredoxin] + S-adenosyl-L-homocysteine. Specifically methylates position 2 of adenine 2503 in 23S rRNA and position 2 of adenine 37 in tRNAs. The protein is Probable dual-specificity RNA methyltransferase RlmN of Streptococcus pneumoniae serotype 19F (strain G54).